Here is a 344-residue protein sequence, read N- to C-terminus: Cell cycle control protein 50C (344 aa).

Residues 1–34 (MEETPQHCLSRLPDNSALKQQELPAHRLYFTARR) lie on the Cytoplasmic side of the membrane. A helical membrane pass occupies residues 35-55 (VLFVFFTTGIFCLCMGIILIL). Residues 56–306 (SARSTQEIEI…STLTWCGGNS (251 aa)) lie on the Extracellular side of the membrane. Residues asparagine 66 and asparagine 261 are each glycosylated (N-linked (GlcNAc...) asparagine). The helical transmembrane segment at 307–327 (LFLGLAYTVTGAITWLASFTM) threads the bilayer. Residues 328–344 (MAIHITLKNKQMSFFHQ) are Cytoplasmic-facing.

This sequence belongs to the CDC50/LEM3 family. As to expression, specifically expressed in testis.

The protein resides in the membrane. The sequence is that of Cell cycle control protein 50C (TMEM30C) from Macaca fascicularis (Crab-eating macaque).